The sequence spans 103 residues: Large ribosomal subunit protein bL21 (103 aa).

It belongs to the bacterial ribosomal protein bL21 family. As to quaternary structure, part of the 50S ribosomal subunit. Contacts protein L20.

Its function is as follows. This protein binds to 23S rRNA in the presence of protein L20. This Pseudomonas paraeruginosa (strain DSM 24068 / PA7) (Pseudomonas aeruginosa (strain PA7)) protein is Large ribosomal subunit protein bL21.